A 103-amino-acid chain; its full sequence is Gibberellin-regulated protein 13 (103 aa).

The signal sequence occupies residues 1-20 (MATKLSIIVFSIVVLHLLLS).

It belongs to the GASA family. Six disulfide bonds may be present.

It localises to the secreted. In terms of biological role, gibberellin-regulated protein that may function in hormonal controlled steps of development such as seed germination, flowering and seed maturation. This chain is Gibberellin-regulated protein 13 (GASA13), found in Arabidopsis thaliana (Mouse-ear cress).